The sequence spans 216 residues: UPF0301 protein BBta_6966 (216 aa).

Belongs to the UPF0301 (AlgH) family.

This Bradyrhizobium sp. (strain BTAi1 / ATCC BAA-1182) protein is UPF0301 protein BBta_6966.